Reading from the N-terminus, the 1167-residue chain is Chromosome partition protein Smc (1167 aa).

32–39 contacts ATP; it reads PNGCGKSN. Coiled coils occupy residues 170–274, 310–390, 468–500, 653–870, and 982–1011; these read ISKY…RIET, QREL…HNRD, GLQEQQRASQGELAEVRKQAQAARGRLSSLETL, ALLR…ERAL, and EYLDAQNLDLNTALETLEEAIRKIDRETRG.

The protein belongs to the SMC family. In terms of assembly, homodimer.

It is found in the cytoplasm. Required for chromosome condensation and partitioning. The polypeptide is Chromosome partition protein Smc (Xanthomonas oryzae pv. oryzae (strain KACC10331 / KXO85)).